A 302-amino-acid chain; its full sequence is Heme A synthase (302 aa).

Over 1 to 8 the chain is Cytoplasmic; it reads MFRKQNLK. The helical transmembrane segment at 9–29 threads the bilayer; sequence WLGVLATIIMTFVQLGGALVT. Over 30 to 67 the chain is Extracellular; it reads KTGSEDGCGSSWPLCNGALLPENLPIQTIIELSHRAVS. An intrachain disulfide couples Cys37 to Cys44. Residue Glu60 is part of the active site. A heme o-binding site is contributed by His63. Residues 68–88 traverse the membrane as a helical segment; sequence AISLIVVLWLVITAWKNIGYI. The Cytoplasmic segment spans residues 89-93; it reads KEIKP. Residues 94-114 form a helical membrane-spanning segment; the sequence is LSIISVGFLLVQALVGAAAVI. Over 115–125 the chain is Extracellular; the sequence is WQQNPYVLALH. Heme o is bound at residue His125. The chain crosses the membrane as a helical span at residues 126–146; it reads FGISLISFSSVFLMTLIIFSI. Topologically, residues 147–161 are cytoplasmic; the sequence is DKKYEADILFIHKPL. A helical transmembrane segment spans residues 162–182; the sequence is RILTWLMAIIVYLTIYTGALV. The Extracellular portion of the chain corresponds to 183–215; that stretch reads RHTKSSLAYGAWPIPFDDIVPHNAHDWVQFSHR. Heme b is bound at residue His214. The helical transmembrane segment at 216 to 236 threads the bilayer; that stretch reads GMALITFIWIMITFIHAIKNY. Residues 237–244 are Cytoplasmic-facing; that stretch reads SDNRTVRY. The helical transmembrane segment at 245–265 threads the bilayer; sequence GYTASFILVILQVITGALSVI. The Extracellular segment spans residues 266-270; sequence TNVNL. The helical transmembrane segment at 271–291 threads the bilayer; the sequence is IIALFHALFITYLFGMIAYFI. A heme b-binding site is contributed by His276. Residues 292–302 are Cytoplasmic-facing; sequence LLMLRTTRSQK.

Belongs to the COX15/CtaA family. Type 1 subfamily. Interacts with CtaB. Requires heme b as cofactor.

Its subcellular location is the cell membrane. The catalysed reaction is Fe(II)-heme o + 2 A + H2O = Fe(II)-heme a + 2 AH2. It participates in porphyrin-containing compound metabolism; heme A biosynthesis; heme A from heme O: step 1/1. Its function is as follows. Catalyzes the conversion of heme O to heme A by two successive hydroxylations of the methyl group at C8. The first hydroxylation forms heme I, the second hydroxylation results in an unstable dihydroxymethyl group, which spontaneously dehydrates, resulting in the formyl group of heme A. In Staphylococcus epidermidis (strain ATCC 35984 / DSM 28319 / BCRC 17069 / CCUG 31568 / BM 3577 / RP62A), this protein is Heme A synthase.